The following is a 338-amino-acid chain: TPR repeat-containing protein MJ0941 (338 aa).

8 TPR repeats span residues 27-62, 63-96, 97-130, 131-164, 165-198, 199-232, 268-301, and 302-335; these read LEAV…EPDF, YLAL…ESKN, PITW…ENRF, LSAF…TPNF, VPMW…KPHD, KNAL…LNVK, VALW…QPHY, and IKAL…IHKD.

This chain is TPR repeat-containing protein MJ0941, found in Methanocaldococcus jannaschii (strain ATCC 43067 / DSM 2661 / JAL-1 / JCM 10045 / NBRC 100440) (Methanococcus jannaschii).